A 200-amino-acid polypeptide reads, in one-letter code: Orotate phosphoribosyltransferase (200 aa).

Residues R95, K99, H101, and 121–129 (DDVATTGGS) contribute to the 5-phospho-alpha-D-ribose 1-diphosphate site. 2 residues coordinate orotate: T125 and R153.

This sequence belongs to the purine/pyrimidine phosphoribosyltransferase family. PyrE subfamily. In terms of assembly, homodimer. Mg(2+) is required as a cofactor.

The enzyme catalyses orotidine 5'-phosphate + diphosphate = orotate + 5-phospho-alpha-D-ribose 1-diphosphate. The protein operates within pyrimidine metabolism; UMP biosynthesis via de novo pathway; UMP from orotate: step 1/2. Its function is as follows. Catalyzes the transfer of a ribosyl phosphate group from 5-phosphoribose 1-diphosphate to orotate, leading to the formation of orotidine monophosphate (OMP). The polypeptide is Orotate phosphoribosyltransferase (Cenarchaeum symbiosum (strain A)).